The following is a 124-amino-acid chain: MSAVAENTTTEMPAPILFTDSAAAKVAELIAEEGNPDLKLRVFVQGGGCSGFQYGFTFDEITNEDDTTMTKNGVSLLIDAMSYQYLVGAEIDYKEDLQGAQFVIKNPNAASTCGCGSSFSVEDH.

Residues Cys49, Cys113, and Cys115 each contribute to the iron-sulfur cluster site.

Belongs to the HesB/IscA family. In terms of assembly, homodimer. Iron-sulfur cluster is required as a cofactor.

Its function is as follows. Required for insertion of 4Fe-4S clusters. The chain is Putative iron-sulfur cluster insertion protein ErpA from Acidovorax sp. (strain JS42).